The chain runs to 1067 residues: Mediator of RNA polymerase II transcription subunit 5 (1067 aa).

This sequence belongs to the Mediator complex subunit 5 family. Component of the Mediator complex.

The protein localises to the nucleus. Functionally, component of the Mediator complex, a coactivator involved in the regulated transcription of nearly all RNA polymerase II-dependent genes. Mediator functions as a bridge to convey information from gene-specific regulatory proteins to the basal RNA polymerase II transcription machinery. Mediator is recruited to promoters by direct interactions with regulatory proteins and serves as a scaffold for the assembly of a functional preinitiation complex with RNA polymerase II and the general transcription factors. This is Mediator of RNA polymerase II transcription subunit 5 (NUT1) from Kluyveromyces lactis (strain ATCC 8585 / CBS 2359 / DSM 70799 / NBRC 1267 / NRRL Y-1140 / WM37) (Yeast).